Here is a 564-residue protein sequence, read N- to C-terminus: MIDLTAAPFSLDDDGIAWVRTTLAEMGEDEKLGQLFCLITYTSDPEYLGYLTRGLHVGGVMLRTMTAADAAATVTTLQSTATVPLLISANLEGGASQTVQEATHVGSNMALAATGSTDHVRRAATVIGREARALGINWAFTPVVDIDLNFRNPITNTRTFGADAATVAAMGAEYVEAIQAQGLAASAKHFPGDGVDERDQHLLASVNTMSVEEWDDSFGVVYRAAIAAGVKTVMVGHIMLPAYSRALRPGVADRDILPGVVAEELLNDLLRDRLGFNGLVVSDSTTMAGLASVLPRSQAVPRVIAAGCDMFLFTKNLDEDFGYMRAGIRDGVITPERLDEAVTRILALKASLGLHRGTNLPAQGAAGVLADPDHSATAREVAASSITLVKEEPGVLPITRERYPRVLVYDLQNGGSPIGQGARAGAVEQFVDALVEAGHDVTRFEPGGGWEGMAAPTTDVTERHDLVLYLANLSTRSNQTVVRIEWAEPMGANVPAYVHSVPTVFVSFENPYHLFDVPRVRTLINTYGSSPVVLETLLAALQGKAPFAGSSPVDAFCGQWDTHL.

The Nucleophile role is filled by Asp283.

Belongs to the glycosyl hydrolase 3 family.

It carries out the reaction Hydrolysis of terminal non-reducing N-acetyl-D-hexosamine residues in N-acetyl-beta-D-hexosaminides.. The catalysed reaction is Hydrolysis of terminal, non-reducing beta-D-glucosyl residues with release of beta-D-glucose.. Catalyzes the cleavage of beta-N-acetyl-D-glucosaminides and beta-D-glucosides. Might be involved in the degradation of glucuronic acid-containing glycosaminoglycans such as hyaluronic acid. The chain is Beta-N-acetylglucosaminidase/beta-glucosidase (nag3) from Cellulomonas fimi.